The chain runs to 220 residues: Claudin-22 (220 aa).

Topologically, residues 1–10 (MGLVFRTATQ) are cytoplasmic. Residues 11–31 (AAALLLSLLGWVLSCLTNYLP) form a helical membrane-spanning segment. At 32–81 (HWKNLNLELNEMENWTMGLWKSCVIQEEVGRQCKDFDSFLALPAELQVSR) the chain is on the extracellular side. A helical membrane pass occupies residues 82-102 (VLMSLCNGLGLLGLLASGCGL). The Cytoplasmic portion of the chain corresponds to 103 to 120 (DCLRLGETQEGLKKRLLT). The helical transmembrane segment at 121–141 (LGGTLLWTSGVMVLVPVSWVA) threads the bilayer. The Extracellular portion of the chain corresponds to 142–164 (HKTVREFWDETMPEIVPRWEFGE). The chain crosses the membrane as a helical span at residues 165–185 (ALFLGWFAGFCLVLGGCVLHC). The Cytoplasmic portion of the chain corresponds to 186–220 (AACWSPAPAASSHYAVAGPRDHQQHLELKQANPEI).

It belongs to the claudin family.

Its subcellular location is the cell junction. The protein localises to the tight junction. It is found in the cell membrane. In terms of biological role, plays a major role in tight junction-specific obliteration of the intercellular space, through calcium-independent cell-adhesion activity. The polypeptide is Claudin-22 (Cldn22) (Mus musculus (Mouse)).